Here is a 600-residue protein sequence, read N- to C-terminus: Aspartate--tRNA(Asp/Asn) ligase (600 aa).

E187 contacts L-aspartate. The tract at residues 211–214 is aspartate; sequence QIFK. L-aspartate contacts are provided by R233 and H463. An ATP-binding site is contributed by 233–235; the sequence is RDE. An ATP-binding site is contributed by E497. R504 is a binding site for L-aspartate. 549–552 contributes to the ATP binding site; it reads GIDR.

Belongs to the class-II aminoacyl-tRNA synthetase family. Type 1 subfamily. In terms of assembly, homodimer.

It is found in the cytoplasm. The catalysed reaction is tRNA(Asx) + L-aspartate + ATP = L-aspartyl-tRNA(Asx) + AMP + diphosphate. Its function is as follows. Aspartyl-tRNA synthetase with relaxed tRNA specificity since it is able to aspartylate not only its cognate tRNA(Asp) but also tRNA(Asn). Reaction proceeds in two steps: L-aspartate is first activated by ATP to form Asp-AMP and then transferred to the acceptor end of tRNA(Asp/Asn). This is Aspartate--tRNA(Asp/Asn) ligase from Wolbachia sp. subsp. Brugia malayi (strain TRS).